Consider the following 507-residue polypeptide: MMQLKLEHYNIKIGQHKVLLNIVDAKELGVNPGDRVRIRGHQSLSAIVDTTDDMVPPGTLGVFTEVYEHFEDWDKPVEVVPSFRSKSAAVIKKMLDKKPVVQDEIKMLVSDIVDENLSDVELSAFITASYIHGMTDDEVEWLTRAMIDTGDTIEFDTHPIMDKHSIGGVPGNKISLLIVPIVAANGLLIPKTSSRAITGAGGTADLMEVLSPVEFSSQEVKEITEKVGGALVWGGATNIAPADDKLIKIEYPLSIDPYYQMLASIMAKKGAIGADNVVMDIPVGPGTKVPTVQEGQKLARDLINLGHRLGMNVECAITYGSSPIGRRVGPSLEVKEAMKVLESMEGPNSLIEKSAALAGILLEMGGAAPRDQGKELALETLRSGKALEKMKQIIEAQGGDPNIKSDDIQTGQYTADIFASTDGYVMEFDNKWIIEIARLAGAPNDKGAGVAIHKKRGEQVKKGDPILTIYAEKEIKLDNALATAQRTNPIIVEGMLLRRIPGTYGFQ.

Residues G168, 194–199, and T203 each bind AMP; that span reads SRAITG. The active-site Proton donor is the D256. Residues S264 and K288 each contribute to the AMP site.

This sequence belongs to the thymidine/pyrimidine-nucleoside phosphorylase family. Type 2 subfamily.

The catalysed reaction is AMP + phosphate = alpha-D-ribose 1,5-bisphosphate + adenine. It catalyses the reaction CMP + phosphate = cytosine + alpha-D-ribose 1,5-bisphosphate. It carries out the reaction UMP + phosphate = alpha-D-ribose 1,5-bisphosphate + uracil. In terms of biological role, catalyzes the conversion of AMP and phosphate to adenine and ribose 1,5-bisphosphate (R15P). Exhibits phosphorylase activity toward CMP and UMP in addition to AMP. Functions in an archaeal AMP degradation pathway, together with R15P isomerase and RubisCO. The polypeptide is AMP phosphorylase (Methanosarcina mazei (strain ATCC BAA-159 / DSM 3647 / Goe1 / Go1 / JCM 11833 / OCM 88) (Methanosarcina frisia)).